We begin with the raw amino-acid sequence, 428 residues long: Glutamyl-tRNA reductase (428 aa).

Residues threonine 49 to arginine 52, serine 109, glutamate 114 to glutamine 116, and glutamine 120 contribute to the substrate site. The active-site Nucleophile is cysteine 50. Residue glycine 189 to serine 194 participates in NADP(+) binding.

Belongs to the glutamyl-tRNA reductase family. In terms of assembly, homodimer.

The enzyme catalyses (S)-4-amino-5-oxopentanoate + tRNA(Glu) + NADP(+) = L-glutamyl-tRNA(Glu) + NADPH + H(+). The protein operates within porphyrin-containing compound metabolism; protoporphyrin-IX biosynthesis; 5-aminolevulinate from L-glutamyl-tRNA(Glu): step 1/2. It functions in the pathway porphyrin-containing compound metabolism; chlorophyll biosynthesis. Catalyzes the NADPH-dependent reduction of glutamyl-tRNA(Glu) to glutamate 1-semialdehyde (GSA). This chain is Glutamyl-tRNA reductase, found in Trichormus variabilis (strain ATCC 29413 / PCC 7937) (Anabaena variabilis).